The sequence spans 462 residues: MSKLWGGRFTEEAEAWVEEFGASISFDKQLVSQDIKGSIAHVTMLAKQGIVTKEEAEKIKIGLQYLLEEAKQNKLNFSVEAEDIHLNIEKMLIERIGEVGGKLHTGRSRNDQVATDMHLYLKEKVEDIIKATKQLQTVLVHQAENNIETIMPGYTHLQRAQPISFAHHILAYFWMLERDVNRYEDSLKRINISPLGAGALAGTTFPIDREYSAELLGFNGIYENSLDAVSDRDFILEFLSNSSMLMMHLSRFCEELILWSSQEFQFIEMSDQYATGSSIMPQKKNPDMAELIRGKTGRVYGNLFSLLTVMKGLPLAYNKDLQEDKEGMFDTVKTVEGCLHIMAGMIETMTVNKEKMGQAVTQDFSNATEIADYLASKGLPFRQAHEIVGKLVLHCTQKGIYLLDVPLETYKEMSPLFEEDLYEVLSPYAAVKRRNSAGGTGFEQIEKALEKAKGLAIEFVGI.

This sequence belongs to the lyase 1 family. Argininosuccinate lyase subfamily.

Its subcellular location is the cytoplasm. It carries out the reaction 2-(N(omega)-L-arginino)succinate = fumarate + L-arginine. The protein operates within amino-acid biosynthesis; L-arginine biosynthesis; L-arginine from L-ornithine and carbamoyl phosphate: step 3/3. This chain is Argininosuccinate lyase, found in Bacillus mycoides (strain KBAB4) (Bacillus weihenstephanensis).